The primary structure comprises 106 residues: Glutaredoxin-1 (106 aa).

A2 bears the N-acetylalanine mark. Positions 3–106 (QAFVNSKIQP…TRLQQIGALK (104 aa)) constitute a Glutaredoxin domain. At K9 the chain carries N6-succinyllysine. 2 cysteine pairs are disulfide-bonded: C23–C26 and C79–C83.

It belongs to the glutaredoxin family.

The protein localises to the cytoplasm. Functionally, has a glutathione-disulfide oxidoreductase activity in the presence of NADPH and glutathione reductase. Reduces low molecular weight disulfides and proteins. The sequence is that of Glutaredoxin-1 (GLRX) from Sus scrofa (Pig).